We begin with the raw amino-acid sequence, 254 residues long: MSSTTSIDSIPATAVFPSVSMPVTVVLTGVLLFVIFAGFFSLFLWQFLLNRLFTTWNLQRTPYGDLIHVATPPENTGLDPFIIRSFPVFHYSSATKKNHGTECAICLSEFSDEDTVRLITVCRHPFHSNCIDLWFELHKTCPVCRCELDPGMIGSGRLESFHNTVTITIQDINHDEENPPTAGSSKRLIEASAWRFSRSHSTGHFMVKTTDANVKSKRRHYQTGSCVSFDELTRYEGAGWQWLGDSSHISRIEV.

The helical transmembrane segment at 25–45 threads the bilayer; that stretch reads VVLTGVLLFVIFAGFFSLFLW. The segment at 103-145 adopts an RING-type; atypical zinc-finger fold; sequence CAICLSEFSDEDTVRLITVCRHPFHSNCIDLWFELHKTCPVCR.

It belongs to the RING-type zinc finger family. ATL subfamily.

Its subcellular location is the membrane. The catalysed reaction is S-ubiquitinyl-[E2 ubiquitin-conjugating enzyme]-L-cysteine + [acceptor protein]-L-lysine = [E2 ubiquitin-conjugating enzyme]-L-cysteine + N(6)-ubiquitinyl-[acceptor protein]-L-lysine.. Its pathway is protein modification; protein ubiquitination. This Arabidopsis thaliana (Mouse-ear cress) protein is RING-H2 finger protein ATL28 (ATL28).